Here is a 295-residue protein sequence, read N- to C-terminus: Golgi-associated RAB2 interactor protein 1A (295 aa).

The tract at residues 187–206 (MPNSSTETTPESSRPASSQS) is disordered. Residues 190 to 206 (SSTETTPESSRPASSQS) are compositionally biased toward low complexity. Serine 220, serine 221, serine 251, and serine 255 each carry phosphoserine.

The protein belongs to the GARIN family. In terms of assembly, interacts (via N-terminus) with RAB2B (in GTP-bound form).

It localises to the golgi apparatus. RAB2B effector protein required for accurate acrosome formation and normal male fertility. The protein is Golgi-associated RAB2 interactor protein 1A (Garin1a) of Rattus norvegicus (Rat).